Reading from the N-terminus, the 214-residue chain is Auxin-binding protein ABP20 (214 aa).

The first 23 residues, 1–23 (MPQATMIFPILFTFFLLLSSSNA), serve as a signal peptide directing secretion. Residues C29 and C44 are joined by a disulfide bond. The Cupin type-1 domain maps to 58–204 (SGLGIAGNTS…TTFLDAAQIK (147 aa)). N-linked (GlcNAc...) asparagine glycosylation occurs at N65. Mn(2+) is bound by residues H106, H108, E113, and H152.

Belongs to the germin family. In terms of assembly, interacts with ABP19.

It is found in the secreted. Its subcellular location is the extracellular space. The protein resides in the apoplast. It localises to the cell wall. Functionally, probable receptor for the plant growth-promoting hormone auxin. In Prunus persica (Peach), this protein is Auxin-binding protein ABP20 (ABP20).